We begin with the raw amino-acid sequence, 125 residues long: Hydrogenase maturation factor HypA (125 aa).

Residue H2 participates in Ni(2+) binding. The Zn(2+) site is built by C73, C76, C96, and C99.

This sequence belongs to the HypA/HybF family.

Involved in the maturation of [NiFe] hydrogenases. Required for nickel insertion into the metal center of the hydrogenase. In Methanobrevibacter smithii (strain ATCC 35061 / DSM 861 / OCM 144 / PS), this protein is Hydrogenase maturation factor HypA.